Consider the following 77-residue polypeptide: U8-lycotoxin-Ls1w (77 aa).

Positions 1-20 are cleaved as a signal peptide; it reads MKLIIFTGLVLFAIVSLIEA. Residues 21 to 26 constitute a propeptide that is removed on maturation; it reads QAENEK.

This sequence belongs to the neurotoxin 19 (CSTX) family. 08 (U8-Lctx) subfamily. In terms of processing, contains 4 disulfide bonds. As to expression, expressed by the venom gland.

The protein localises to the secreted. This is U8-lycotoxin-Ls1w from Lycosa singoriensis (Wolf spider).